We begin with the raw amino-acid sequence, 282 residues long: Bifunctional protein FolD (282 aa).

NADP(+)-binding positions include 166–168 and I232; that span reads GAS.

The protein belongs to the tetrahydrofolate dehydrogenase/cyclohydrolase family. Homodimer.

The enzyme catalyses (6R)-5,10-methylene-5,6,7,8-tetrahydrofolate + NADP(+) = (6R)-5,10-methenyltetrahydrofolate + NADPH. The catalysed reaction is (6R)-5,10-methenyltetrahydrofolate + H2O = (6R)-10-formyltetrahydrofolate + H(+). It participates in one-carbon metabolism; tetrahydrofolate interconversion. Its function is as follows. Catalyzes the oxidation of 5,10-methylenetetrahydrofolate to 5,10-methenyltetrahydrofolate and then the hydrolysis of 5,10-methenyltetrahydrofolate to 10-formyltetrahydrofolate. In Haemophilus influenzae (strain PittEE), this protein is Bifunctional protein FolD.